Here is a 367-residue protein sequence, read N- to C-terminus: Glutamate 5-kinase (367 aa).

Lys10 contributes to the ATP binding site. Substrate contacts are provided by Ser50, Asp137, and Asn149. ATP-binding positions include Thr169–Asp170 and Thr211–Lys217. The 79-residue stretch at Ala275–Glu353 folds into the PUA domain.

It belongs to the glutamate 5-kinase family.

It localises to the cytoplasm. It catalyses the reaction L-glutamate + ATP = L-glutamyl 5-phosphate + ADP. The protein operates within amino-acid biosynthesis; L-proline biosynthesis; L-glutamate 5-semialdehyde from L-glutamate: step 1/2. Functionally, catalyzes the transfer of a phosphate group to glutamate to form L-glutamate 5-phosphate. The protein is Glutamate 5-kinase of Pasteurella multocida (strain Pm70).